A 510-amino-acid chain; its full sequence is Sucrose transport protein SUC4 (510 aa).

The tract at residues 1–34 is disordered; sequence MATSDQDRRHRVTRNRPPIARPSTSSSRPVVSPP. Residues 1–45 lie on the Cytoplasmic side of the membrane; it reads MATSDQDRRHRVTRNRPPIARPSTSSSRPVVSPPRSKVSKRVLLR. Residues 21-34 are compositionally biased toward low complexity; sequence RPSTSSSRPVVSPP. S23 is modified (phosphoserine). Residues 46–66 form a helical membrane-spanning segment; it reads VASVACGIQFGWALQLSLLTP. The Extracellular segment spans residues 67 to 71; sequence YVQEL. A helical membrane pass occupies residues 72–92; it reads GIPHAWASVIWLCGPLSGLFV. Residues 93–111 lie on the Cytoplasmic side of the membrane; that stretch reads QPLVGHSSDRCTSKYGRRR. The chain crosses the membrane as a helical span at residues 112–132; sequence PFIVAGAVAISISVMVIGHAA. Residues 133 to 148 lie on the Extracellular side of the membrane; sequence DIGWAFGDREGKIKPR. Residues 149-169 form a helical membrane-spanning segment; that stretch reads AIVAFVLGFWILDVANNMTQG. Topologically, residues 170 to 187 are cytoplasmic; the sequence is PCRALLADLTENDNRRTR. The chain crosses the membrane as a helical span at residues 188–208; sequence VANGYFSLFMAVGNVLGYATG. Over 209–233 the chain is Extracellular; sequence SYNGWYKIFTFTKTVACNVECANLK. A helical transmembrane segment spans residues 234–254; it reads SAFYIDVVFIAITTILSVSAA. Over 255 to 291 the chain is Cytoplasmic; that stretch reads HEVPLASLASEAHGQTSGTDEAFLSEIFGTFRYFPGN. Residues 292 to 312 traverse the membrane as a helical segment; sequence VWIILLVTALTWIGWFPFILF. At 313 to 335 the chain is on the extracellular side; the sequence is DTDWMGREIYGGEPNIGTSYSAG. Residues 336 to 356 form a helical membrane-spanning segment; sequence VSMGALGLMLNSVFLGITSVL. Topologically, residues 357-365 are cytoplasmic; the sequence is MEKLCRKWG. Residues 366–386 form a helical membrane-spanning segment; sequence AGFVWGISNILMAICFLGMII. Topologically, residues 387-402 are extracellular; that stretch reads TSFVASHLGYIGHEQP. Residues 403–423 form a helical membrane-spanning segment; it reads PASIVFAAVLIFTILGIPLAI. The Cytoplasmic portion of the chain corresponds to 424–443; that stretch reads TYSVPYALISIRIESLGLGQ. A helical membrane pass occupies residues 444–464; the sequence is GLSLGVLNLAIVIPQVIVSVG. Residues 465-477 are Extracellular-facing; that stretch reads SGPWDQLFGGGNS. Residues 478 to 498 traverse the membrane as a helical segment; it reads PALAVGAATGFIGGIVAILAL. At 499 to 510 the chain is on the cytoplasmic side; that stretch reads PRTRIQKPIPLP.

It belongs to the glycoside-pentoside-hexuronide (GPH) cation symporter transporter (TC 2.A.2.4) family. In terms of assembly, homodimer. Interacts with SUC2 and SUC3. As to expression, expressed in sink tissues, mostly in minor veins of sink leaves. Localized in companion cells.

The protein resides in the cell membrane. It carries out the reaction sucrose(out) + H(+)(out) = sucrose(in) + H(+)(in). Its pathway is glycan biosynthesis; sucrose metabolism. Functionally, responsible for the transport of sucrose into the cell, with the concomitant uptake of protons (symport system). Can also transport maltose at a lesser rate. May also transport biotin. The chain is Sucrose transport protein SUC4 from Arabidopsis thaliana (Mouse-ear cress).